The chain runs to 311 residues: Olfactory receptor 10G7 (311 aa).

At 1 to 23 (MSNATLLTAFILTGLPHAPGLDA) the chain is on the extracellular side. N-linked (GlcNAc...) asparagine glycosylation occurs at Asn3. A helical membrane pass occupies residues 24–44 (PLFGIFLVVYVLTVLGNLLIL). At 45–52 (LVIRVDSH) the chain is on the cytoplasmic side. The helical transmembrane segment at 53–73 (LHTPMYYFLTNLSFIDMWFST) threads the bilayer. At 74–98 (VTVPKMLMTLVSPSGRTISFHSCVA) the chain is on the extracellular side. Cys96 and Cys188 are joined by a disulfide. A helical membrane pass occupies residues 99–119 (QLYFFHFLGSTECFLYTVMSY). The Cytoplasmic segment spans residues 120-138 (DRYLAISYPLRYTNMMTGR). The chain crosses the membrane as a helical span at residues 139-159 (SCALLATGTWLSGSLHSAVQT). The Extracellular portion of the chain corresponds to 160–196 (ILTFHLPYCGPNQIQHYFCDAPPILKLACADTSANEM). A helical transmembrane segment spans residues 197 to 216 (VIFVNIGLVASGCFVLIVLS). At 217–236 (YVSIVCSILRIRTSEGRHRA) the chain is on the cytoplasmic side. The helical transmembrane segment at 237–257 (FQTCASHCIVVLCFFGPGLFI) threads the bilayer. Topologically, residues 258-268 (YLRPGSRDALH) are extracellular. A helical membrane pass occupies residues 269 to 289 (GVVAVFYTTLTPLFNPVVYTL). At 290–311 (RNKEVKKALLKLKNGSVFAQGE) the chain is on the cytoplasmic side.

The protein belongs to the G-protein coupled receptor 1 family.

The protein localises to the cell membrane. Odorant receptor. The chain is Olfactory receptor 10G7 (OR10G7) from Homo sapiens (Human).